We begin with the raw amino-acid sequence, 149 residues long: Hydroalkoxylation enzyme phnH (149 aa).

The signal sequence occupies residues 1–18; sequence MKFTYLVSLAAFAVTALG. Residues asparagine 33 and asparagine 127 are each glycosylated (N-linked (GlcNAc...) asparagine).

Homotetramer.

The catalysed reaction is 2,4,7,9-tetrahydroxy-6-methyl-8-(2-methylbut-3-en-2-yl)-1-oxo-1H-phenalen-3-ol = (2'R)-atrovenetin. Its pathway is secondary metabolite biosynthesis. Hydroalkoxylation enzyme; part of the gene cluster that mediates the biosynthesis of phenalenones such as herqueinone, compounds that have been reported to treat tumors, bacterial infections and/or mycoses, and rheumatic diseases. The non-reducing polyketide synthase phnA synthesizes the heptaketide backbone and cyclizes it into the angular, hemiketal-containing naphtho-gamma-pyrone prephenalenone. The product template (PT) domain of phnA catalyzes only the C4-C9 aldol condensation, which is unprecedented among known PT domains. The transformation of prephenalenone to phenalenones requires an FAD-dependent monooxygenase phnB, which catalyzes the C2 aromatic hydroxylation of prephenalenone and ring opening of the gamma-pyrone ring simultaneously. Subsequent intramolecular deprotonation of C3 phenolic oxygen accelerates phenalenone ring closure to yield the tricyclic phenalenone core with a C2 hydroxylation. The prenyltransferase phnF further catalyzes reverse C-prenylation of phenalenone by direct electrophilic substitution at C6, or possibly via first a forward O-prenylation of a neighboring phenol in phenalenone, followed by a Claisen rearrangement. The hydroalkoxylation enzyme phnH catalyzes the 5-exo-trig cyclization via acid catalysis after the spontaneous deprotonation of 7-OH, which leads to the formation of the dihydrobenzofuran atrovenetin. Atrovenetin is further converted to deoxyherqueinone by the O-methyltransferase phnC which can methylate C2-OH to stabilize the northern portion of the phenalenone core. Finally, the oxidoreductase phnG converts deoxyherqueinone to herqueinone via C6 hydroxylation. The protein is Hydroalkoxylation enzyme phnH of Penicillium herquei.